A 338-amino-acid polypeptide reads, in one-letter code: POU domain, class 4, transcription factor 3 (338 aa).

Positions 56-65 match the POU-IV box motif; that stretch reads RAEALAAVDI. Positions 91–112 are disordered; sequence TSPTVPISHPAALTSHPHHPVH. The POU-specific domain maps to 179-256; that stretch reads DVESDPRELE…VLQAWLEEAE (78 aa). The homeobox DNA-binding region spans 274–333; that stretch reads RKRKRTSIAAPEKRSLEAYFAIQPRPSSEKIAAIAEKLDLKKNVVRVWFCNQRQKQKRMK.

Belongs to the POU transcription factor family. As to quaternary structure, interacts with ISL1. As to expression, expressed in the chochlea of the inner ear.

The protein resides in the nucleus. It localises to the cytoplasm. In terms of biological role, acts as a transcriptional activator. Acts by binding to sequences related to the consensus octamer motif 5'-ATGCAAAT-3' in the regulatory regions of its target genes. Involved in the auditory system development, required for terminal differentiation of hair cells in the inner ear. The sequence is that of POU domain, class 4, transcription factor 3 from Rattus norvegicus (Rat).